The following is a 584-amino-acid chain: MERLVFCVLVFGALAKAQLCPGRCICQTISPTLTLLCAKTGLLFVPPTVDRKTVELRLTDNFITAVRRKDFLNMTSLVHLTLSRNTISQIAPHAFMGLKSLRALHMDGNRLSVINSDQLKGLMNLRHLILGNNQIHHIEESSFDEFVATIEDLDLSYNNLRTLPWEAIARMTNINTLTLDHNLIDHIGVGTFTLLTKLVRLDMTSNRLQTLPPDTLFQHAQVLSEPKTSSSSRLTVSFGGNPLHCNCELLWLRRLTREDDLETCASPEHLMDKYFWSIQEEEFICEPPLITKHQVTKPYVMEGQGVTLKCKAMGDPDPAIHWRFPDGKLVHNNSRTILYDNGTLDILITTLKDSGAFNCVASNAAGIATAAVHVHMIPLPLLVNNTGHMREADPGLSDISTSSRSSSNDSKTHSKRVLVENLTAHSAVIHWPSERHIPGIRMYQIQYELCVLAVYDDGITSLTATRVVGCVHFHTLPETNQCRFVPSQFLGGTMIIIIGGIIVASVLVFIIILMIRYKAYSGGGGDTAKAKAGGDVSVHVHSQTNGSRSAATKQSEEPPESPAGKHCKALVLLKMVLPILHLLF.

The signal sequence occupies residues 1–17; it reads MERLVFCVLVFGALAKA. An LRRNT domain is found at 18–51; that stretch reads QLCPGRCICQTISPTLTLLCAKTGLLFVPPTVDR. The Extracellular segment spans residues 18 to 494; the sequence is QLCPGRCICQ…VPSQFLGGTM (477 aa). LRR repeat units follow at residues 52-73, 76-97, 100-121, 124-145, 149-170, 173-194, and 197-218; these read KTVE…DFLN, SLVH…AFMG, SLRA…QLKG, NLRH…SFDE, TIED…AIAR, NINT…TFTL, and KLVR…TLFQ. A glycan (N-linked (GlcNAc...) asparagine) is linked at Asn-73. An LRRCT domain is found at 241–287; it reads NPLHCNCELLWLRRLTREDDLETCASPEHLMDKYFWSIQEEEFICEP. Positions 288–375 constitute an Ig-like domain; that stretch reads PLITKHQVTK…GIATAAVHVH (88 aa). A disulfide bond links Cys-310 and Cys-359. 5 N-linked (GlcNAc...) asparagine glycosylation sites follow: Asn-332, Asn-341, Asn-384, Asn-408, and Asn-421. The tract at residues 393–414 is disordered; the sequence is DPGLSDISTSSRSSSNDSKTHS. A compositionally biased stretch (low complexity) spans 397 to 409; the sequence is SDISTSSRSSSND. Residues 495–515 traverse the membrane as a helical segment; that stretch reads IIIIGGIIVASVLVFIIILMI. Topologically, residues 516-584 are cytoplasmic; the sequence is RYKAYSGGGG…MVLPILHLLF (69 aa). The interval 539 to 564 is disordered; it reads HVHSQTNGSRSAATKQSEEPPESPAG. Polar residues predominate over residues 540 to 553; that stretch reads VHSQTNGSRSAATK.

The protein belongs to the LRFN family.

It localises to the membrane. The protein resides in the synapse. Functionally, involved in the regulation of excitatory synapses. This Danio rerio (Zebrafish) protein is Leucine-rich repeat and fibronectin type III domain-containing protein 1 (lrfn1).